The primary structure comprises 314 residues: Regulator of microtubule dynamics protein 1 (314 aa).

Lys165 carries the post-translational modification N6-succinyllysine. TPR repeat units follow at residues 168 to 204 (AICL…NPKD) and 222 to 258 (PWYQ…DPNF).

Belongs to the RMDN family. As to quaternary structure, interacts with microtubules.

It is found in the cytoplasm. It localises to the cytoskeleton. The protein localises to the spindle. Its subcellular location is the spindle pole. The sequence is that of Regulator of microtubule dynamics protein 1 (RMDN1) from Homo sapiens (Human).